The sequence spans 95 residues: Histone-like DNA-binding protein (95 aa).

The protein belongs to the bacterial histone-like protein family.

This chain is Histone-like DNA-binding protein, found in Rickettsia typhi (strain ATCC VR-144 / Wilmington).